A 235-amino-acid chain; its full sequence is Leucyl/phenylalanyl-tRNA--protein transferase (235 aa).

It belongs to the L/F-transferase family.

The protein localises to the cytoplasm. The enzyme catalyses N-terminal L-lysyl-[protein] + L-leucyl-tRNA(Leu) = N-terminal L-leucyl-L-lysyl-[protein] + tRNA(Leu) + H(+). It catalyses the reaction N-terminal L-arginyl-[protein] + L-leucyl-tRNA(Leu) = N-terminal L-leucyl-L-arginyl-[protein] + tRNA(Leu) + H(+). The catalysed reaction is L-phenylalanyl-tRNA(Phe) + an N-terminal L-alpha-aminoacyl-[protein] = an N-terminal L-phenylalanyl-L-alpha-aminoacyl-[protein] + tRNA(Phe). Its function is as follows. Functions in the N-end rule pathway of protein degradation where it conjugates Leu, Phe and, less efficiently, Met from aminoacyl-tRNAs to the N-termini of proteins containing an N-terminal arginine or lysine. The protein is Leucyl/phenylalanyl-tRNA--protein transferase of Methylococcus capsulatus (strain ATCC 33009 / NCIMB 11132 / Bath).